Consider the following 155-residue polypeptide: Small ribosomal subunit protein uS7cz/uS7cy (155 aa).

This sequence belongs to the universal ribosomal protein uS7 family. In terms of assembly, part of the 30S ribosomal subunit.

It is found in the plastid. The protein localises to the chloroplast. One of the primary rRNA binding proteins, it binds directly to 16S rRNA where it nucleates assembly of the head domain of the 30S subunit. In Populus trichocarpa (Western balsam poplar), this protein is Small ribosomal subunit protein uS7cz/uS7cy (rps7-A).